The chain runs to 205 residues: Holliday junction branch migration complex subunit RuvA (205 aa).

The domain I stretch occupies residues 1–68 (MIGYLEGTLL…QPKPVLIGFN (68 aa)). The domain II stretch occupies residues 69 to 146 (TEEEKDFFHL…RFADAGHSSA (78 aa)). The tract at residues 147–151 (PDVPV) is flexible linker. Positions 152-205 (TGSLADQTVEVLVGQLGYKPNEARLMVAGALKRNPDVSTPEALFDEIFKHGQAQ) are domain III.

The protein belongs to the RuvA family. Homotetramer. Forms an RuvA(8)-RuvB(12)-Holliday junction (HJ) complex. HJ DNA is sandwiched between 2 RuvA tetramers; dsDNA enters through RuvA and exits via RuvB. An RuvB hexamer assembles on each DNA strand where it exits the tetramer. Each RuvB hexamer is contacted by two RuvA subunits (via domain III) on 2 adjacent RuvB subunits; this complex drives branch migration. In the full resolvosome a probable DNA-RuvA(4)-RuvB(12)-RuvC(2) complex forms which resolves the HJ.

It localises to the cytoplasm. The RuvA-RuvB-RuvC complex processes Holliday junction (HJ) DNA during genetic recombination and DNA repair, while the RuvA-RuvB complex plays an important role in the rescue of blocked DNA replication forks via replication fork reversal (RFR). RuvA specifically binds to HJ cruciform DNA, conferring on it an open structure. The RuvB hexamer acts as an ATP-dependent pump, pulling dsDNA into and through the RuvAB complex. HJ branch migration allows RuvC to scan DNA until it finds its consensus sequence, where it cleaves and resolves the cruciform DNA. The polypeptide is Holliday junction branch migration complex subunit RuvA (Desulfosudis oleivorans (strain DSM 6200 / JCM 39069 / Hxd3) (Desulfococcus oleovorans)).